Consider the following 179-residue polypeptide: Large ribosomal subunit protein uL6 (179 aa).

Belongs to the universal ribosomal protein uL6 family. Part of the 50S ribosomal subunit.

In terms of biological role, this protein binds to the 23S rRNA, and is important in its secondary structure. It is located near the subunit interface in the base of the L7/L12 stalk, and near the tRNA binding site of the peptidyltransferase center. The protein is Large ribosomal subunit protein uL6 of Halothermothrix orenii (strain H 168 / OCM 544 / DSM 9562).